Reading from the N-terminus, the 82-residue chain is MVTIRLTRGGAKKRPFYQIVVADSRSPRDGRFIERIGFFNPLAAGQAERLRLDVAKVDAWVAKGAALSERVATLVKEARKAA.

The protein belongs to the bacterial ribosomal protein bS16 family.

The chain is Small ribosomal subunit protein bS16 from Haemophilus ducreyi (strain 35000HP / ATCC 700724).